The primary structure comprises 292 residues: MRHLITTKDFSNGEILALFKEAKEFLDEKPRTFLEGKSVTTIFFENSTRTQSSFETAARRLGAKVLKLDVSRSSSSKGETLFDTAANLDAMAPSAIVVRHKNSGVPHTLANYTHCPIVNGGDGKHAHPTQALLDLFTIMEHFDYNVKGKKIAIVGDIKNSRVAASNLELLPRFGIDITLVAPPHFMPNYPIKKTNKLKEVIDDVDIIMSLRTQTERHNIPTYASLKDYANDFCISKDLIKDKNLIILHPGPVHRNIDISDDVMADKRCKVLTQVKNGVAIRMAVLKKLILES.

Positions 49 and 50 each coordinate carbamoyl phosphate. Lys77 serves as a coordination point for L-aspartate. Carbamoyl phosphate is bound by residues Arg99, His127, and Gln130. Arg161 and Arg211 together coordinate L-aspartate. Carbamoyl phosphate contacts are provided by Gly250 and Pro251.

It belongs to the aspartate/ornithine carbamoyltransferase superfamily. ATCase family. As to quaternary structure, heterododecamer (2C3:3R2) of six catalytic PyrB chains organized as two trimers (C3), and six regulatory PyrI chains organized as three dimers (R2).

The catalysed reaction is carbamoyl phosphate + L-aspartate = N-carbamoyl-L-aspartate + phosphate + H(+). The protein operates within pyrimidine metabolism; UMP biosynthesis via de novo pathway; (S)-dihydroorotate from bicarbonate: step 2/3. Functionally, catalyzes the condensation of carbamoyl phosphate and aspartate to form carbamoyl aspartate and inorganic phosphate, the committed step in the de novo pyrimidine nucleotide biosynthesis pathway. The sequence is that of Aspartate carbamoyltransferase catalytic subunit from Campylobacter lari (strain RM2100 / D67 / ATCC BAA-1060).